We begin with the raw amino-acid sequence, 439 residues long: Ribosomal protein uS12 methylthiotransferase RimO (439 aa).

Residues 4-114 (PKVGFVSLGC…VVRAVHGVAP (111 aa)) form the MTTase N-terminal domain. [4Fe-4S] cluster is bound by residues C13, C49, C78, C147, C151, and C154. The Radical SAM core domain occupies 133-370 (LTPRHYAYLK…MEHQQAISTA (238 aa)). In terms of domain architecture, TRAM spans 373–439 (STRVGREIDV…EYDLWGERIA (67 aa)).

Belongs to the methylthiotransferase family. RimO subfamily. It depends on [4Fe-4S] cluster as a cofactor.

It is found in the cytoplasm. The enzyme catalyses L-aspartate(89)-[ribosomal protein uS12]-hydrogen + (sulfur carrier)-SH + AH2 + 2 S-adenosyl-L-methionine = 3-methylsulfanyl-L-aspartate(89)-[ribosomal protein uS12]-hydrogen + (sulfur carrier)-H + 5'-deoxyadenosine + L-methionine + A + S-adenosyl-L-homocysteine + 2 H(+). Its function is as follows. Catalyzes the methylthiolation of an aspartic acid residue of ribosomal protein uS12. In Bordetella parapertussis (strain 12822 / ATCC BAA-587 / NCTC 13253), this protein is Ribosomal protein uS12 methylthiotransferase RimO.